An 89-amino-acid chain; its full sequence is Small ribosomal subunit protein uS15 (89 aa).

Belongs to the universal ribosomal protein uS15 family. As to quaternary structure, part of the 30S ribosomal subunit. Forms a bridge to the 50S subunit in the 70S ribosome, contacting the 23S rRNA.

Functionally, one of the primary rRNA binding proteins, it binds directly to 16S rRNA where it helps nucleate assembly of the platform of the 30S subunit by binding and bridging several RNA helices of the 16S rRNA. Its function is as follows. Forms an intersubunit bridge (bridge B4) with the 23S rRNA of the 50S subunit in the ribosome. In Geobacillus kaustophilus (strain HTA426), this protein is Small ribosomal subunit protein uS15.